Here is a 320-residue protein sequence, read N- to C-terminus: Ribose-phosphate pyrophosphokinase (320 aa).

ATP-binding positions include 43–45 (DGE) and 102–103 (RQ). Residues His-136 and Asp-178 each contribute to the Mg(2+) site. The active site involves Lys-201. D-ribose 5-phosphate is bound by residues Arg-203, Asp-227, and 231 to 235 (DTAGT).

This sequence belongs to the ribose-phosphate pyrophosphokinase family. Class I subfamily. In terms of assembly, homohexamer. Requires Mg(2+) as cofactor.

The protein localises to the cytoplasm. It carries out the reaction D-ribose 5-phosphate + ATP = 5-phospho-alpha-D-ribose 1-diphosphate + AMP + H(+). The protein operates within metabolic intermediate biosynthesis; 5-phospho-alpha-D-ribose 1-diphosphate biosynthesis; 5-phospho-alpha-D-ribose 1-diphosphate from D-ribose 5-phosphate (route I): step 1/1. Its function is as follows. Involved in the biosynthesis of the central metabolite phospho-alpha-D-ribosyl-1-pyrophosphate (PRPP) via the transfer of pyrophosphoryl group from ATP to 1-hydroxyl of ribose-5-phosphate (Rib-5-P). The protein is Ribose-phosphate pyrophosphokinase of Clostridium tetani (strain Massachusetts / E88).